A 952-amino-acid polypeptide reads, in one-letter code: ALS2 C-terminal-like protein (952 aa).

MORN repeat units lie at residues 358 to 380 (YDGE…DGRN), 381 to 403 (HVGT…QASE), 409 to 431 (YKCH…TDEV), 432 to 454 (YKGY…PQAP), 459 to 481 (YTGH…DRGE), 483 to 505 (YIGM…AGVC), 506 to 528 (YQGT…DDSL), and 529 to 552 (YEGT…NGFT). A VPS9 domain is found at 795–941 (LFPDTKLLEF…IQKEDMRPHH (147 aa)).

Homodimer. Forms a heteromeric complex with ALS2. Interacts with ALS2 and RAB5A. Expressed in heart, lung, liver and kidney.

The protein localises to the cytoplasm. Its function is as follows. Acts as a guanine nucleotide exchange factor (GEF) for Rab5 GTPase. Regulates the ALS2-mediated endosome dynamics. The chain is ALS2 C-terminal-like protein (Als2cl) from Mus musculus (Mouse).